The primary structure comprises 854 residues: Translation initiation factor IF-2 (854 aa).

Basic residues predominate over residues 61 to 72 (KNIKTPTAKKPK). Disordered stretches follow at residues 61-115 (KNIK…LASA) and 167-186 (ESLKKKKKEKKSFVASKKES). Basic and acidic residues predominate over residues 73–108 (KENAKDQEKLNESEKKEPKKEESKEQEKQEIIDTHK). Positions 353 to 520 (TRAPVITIMG…IVLLQADILE (168 aa)) constitute a tr-type G domain. The tract at residues 362–369 (GHVDHGKT) is G1. 362–369 (GHVDHGKT) is a binding site for GTP. Residues 387-391 (GITQH) are G2. A G3 region spans residues 408–411 (DTPG). GTP-binding positions include 408 to 412 (DTPGH) and 462 to 465 (NKMD). Positions 462 to 465 (NKMD) are G4. Residues 498 to 500 (SAK) form a G5 region.

This sequence belongs to the TRAFAC class translation factor GTPase superfamily. Classic translation factor GTPase family. IF-2 subfamily.

It localises to the cytoplasm. In terms of biological role, one of the essential components for the initiation of protein synthesis. Protects formylmethionyl-tRNA from spontaneous hydrolysis and promotes its binding to the 30S ribosomal subunits. Also involved in the hydrolysis of GTP during the formation of the 70S ribosomal complex. This is Translation initiation factor IF-2 from Campylobacter jejuni subsp. doylei (strain ATCC BAA-1458 / RM4099 / 269.97).